The chain runs to 180 residues: Ribosome maturation factor RimM (180 aa).

Residues 104 to 177 (PEEFHDHQLV…RVVVDPPGGL (74 aa)) form the PRC barrel domain.

It belongs to the RimM family. In terms of assembly, binds ribosomal protein uS19.

Its subcellular location is the cytoplasm. Functionally, an accessory protein needed during the final step in the assembly of 30S ribosomal subunit, possibly for assembly of the head region. Essential for efficient processing of 16S rRNA. May be needed both before and after RbfA during the maturation of 16S rRNA. It has affinity for free ribosomal 30S subunits but not for 70S ribosomes. The sequence is that of Ribosome maturation factor RimM from Salinispora arenicola (strain CNS-205).